A 399-amino-acid polypeptide reads, in one-letter code: uncharacterized protein (399 aa).

Belongs to the TelA family.

This is an uncharacterized protein from Listeria monocytogenes serovar 1/2a (strain ATCC BAA-679 / EGD-e).